A 39-amino-acid chain; its full sequence is Small basic protein 1 (39 aa).

A Pyrrolidone carboxylic acid modification is found at Gln1. Disulfide bonds link Cys6–Cys32, Cys10–Cys26, and Cys14–Cys31.

The protein resides in the secreted. This chain is Small basic protein 1, found in Anas platyrhynchos (Mallard).